Here is a 267-residue protein sequence, read N- to C-terminus: Diacetylchitobiose deacetylase (267 aa).

Belongs to the PIGL family. As to quaternary structure, homohexamer.

It localises to the cytoplasm. It carries out the reaction N,N'-diacetylchitobiose + H2O = beta-D-glucosaminyl-(1-&gt;4)-N-acetyl-D-glucosamine + acetate. The protein operates within glycan degradation; chitin degradation. Its function is as follows. Deacylates the non-reducing end of diacetylchitobiose (GlcNAc2). Can also use N-acetylglucosamine (GlcNAc) and N-acetylchitotriose (GlcNAc3). Probably involved in chitin degradation. The protein is Diacetylchitobiose deacetylase (dac) of Thermococcus kodakarensis (strain ATCC BAA-918 / JCM 12380 / KOD1) (Pyrococcus kodakaraensis (strain KOD1)).